A 325-amino-acid polypeptide reads, in one-letter code: uncharacterized protein (325 aa).

The protein belongs to the mgp1/MG371 family.

This is an uncharacterized protein from Mycoplasma pneumoniae (strain ATCC 29342 / M129 / Subtype 1) (Mycoplasmoides pneumoniae).